The primary structure comprises 356 residues: Protein-glutamate methylesterase/protein-glutamine glutaminase (356 aa).

The 118-residue stretch at 4–121 folds into the Response regulatory domain; sequence KVLIVDDSAL…QSGMLEYTDL (118 aa). A 4-aspartylphosphate modification is found at Asp-55. Residues 156–349 enclose the CheB-type methylesterase domain; sequence PLTSSEKLII…RRVLEFFAAH (194 aa). Active-site residues include Ser-169, His-195, and Asp-291.

Belongs to the CheB family. Post-translationally, phosphorylated by CheA. Phosphorylation of the N-terminal regulatory domain activates the methylesterase activity.

The protein resides in the cytoplasm. It carries out the reaction [protein]-L-glutamate 5-O-methyl ester + H2O = L-glutamyl-[protein] + methanol + H(+). The enzyme catalyses L-glutaminyl-[protein] + H2O = L-glutamyl-[protein] + NH4(+). In terms of biological role, involved in chemotaxis. Part of a chemotaxis signal transduction system that modulates chemotaxis in response to various stimuli. Catalyzes the demethylation of specific methylglutamate residues introduced into the chemoreceptors (methyl-accepting chemotaxis proteins or MCP) by CheR. Also mediates the irreversible deamidation of specific glutamine residues to glutamic acid. In Thiobacillus denitrificans (strain ATCC 25259 / T1), this protein is Protein-glutamate methylesterase/protein-glutamine glutaminase.